A 396-amino-acid chain; its full sequence is ATP-dependent RNA helicase eIF4A (396 aa).

The short motif at histidine 22 to glutamine 50 is the Q motif element. One can recognise a Helicase ATP-binding domain in the interval isoleucine 53–isoleucine 223. Alanine 66 to threonine 73 serves as a coordination point for ATP. The short motif at aspartate 171–aspartate 174 is the DEAD box element. Positions glycine 234–phenylalanine 395 constitute a Helicase C-terminal domain.

It belongs to the DEAD box helicase family. eIF4A subfamily. As to quaternary structure, component of the eIF4F complex, which composition varies with external and internal environmental conditions. It is composed of at least eIF4A, eIF4E and eIF4G.

The protein resides in the cytoplasm. The catalysed reaction is ATP + H2O = ADP + phosphate + H(+). In terms of biological role, ATP-dependent RNA helicase which is a subunit of the eIF4F complex involved in cap recognition and is required for mRNA binding to ribosome. In the current model of translation initiation, eIF4A unwinds RNA secondary structures in the 5'-UTR of mRNAs which is necessary to allow efficient binding of the small ribosomal subunit, and subsequent scanning for the initiator codon. This Eremothecium gossypii (strain ATCC 10895 / CBS 109.51 / FGSC 9923 / NRRL Y-1056) (Yeast) protein is ATP-dependent RNA helicase eIF4A (TIF1).